The sequence spans 309 residues: MEVLLGVKIGCLLALLVLTLGCGLTPIYVKWFQMDAATGHHHRVLSLLGCTSAGVFLGAGLMHMTAEALEGIESEIQKFVEQNSTGSKGNSSRDAASSYVEYPYGELVISLGFFFVFLLESLALQCCHGAAGGSTVQEEEWGGTHAFGFHKHPAVPSPSRGPLRALVLLLSLSFHSVFEGLAVGLQATVAATIQLCVAVLAHKGLVVFSVGLRLGKIGTGPRWATFCILSLALMSPVGLALGLTVAGGASGQTQGLAQAVLEGIAAGTFLYVTFLEILPRELACPEAPLAKYSCVAAGFAFMALIALWA.

At 1–8 the chain is on the extracellular side; it reads MEVLLGVK. The helical transmembrane segment at 9–29 threads the bilayer; the sequence is IGCLLALLVLTLGCGLTPIYV. The Cytoplasmic portion of the chain corresponds to 30 to 43; the sequence is KWFQMDAATGHHHR. The chain crosses the membrane as a helical span at residues 44–64; the sequence is VLSLLGCTSAGVFLGAGLMHM. At 65 to 103 the chain is on the extracellular side; it reads TAEALEGIESEIQKFVEQNSTGSKGNSSRDAASSYVEYP. Residues 104–124 form a helical membrane-spanning segment; the sequence is YGELVISLGFFFVFLLESLAL. Residues 125–164 are Cytoplasmic-facing; sequence QCCHGAAGGSTVQEEEWGGTHAFGFHKHPAVPSPSRGPLR. The chain crosses the membrane as a helical span at residues 165 to 185; the sequence is ALVLLLSLSFHSVFEGLAVGL. The Zn(2+) site is built by histidine 175 and glutamate 179. Residues 186–191 are Extracellular-facing; it reads QATVAA. Residues 192–212 traverse the membrane as a helical segment; it reads TIQLCVAVLAHKGLVVFSVGL. Histidine 202 contacts Zn(2+). The Cytoplasmic segment spans residues 213 to 225; the sequence is RLGKIGTGPRWAT. The chain crosses the membrane as a helical span at residues 226-246; the sequence is FCILSLALMSPVGLALGLTVA. Topologically, residues 247–258 are extracellular; the sequence is GGASGQTQGLAQ. The helical transmembrane segment at 259 to 279 threads the bilayer; it reads AVLEGIAAGTFLYVTFLEILP. Glutamate 276 contributes to the Zn(2+) binding site. Over 280-288 the chain is Cytoplasmic; the sequence is RELACPEAP. Residues 289-309 form a helical membrane-spanning segment; the sequence is LAKYSCVAAGFAFMALIALWA.

It belongs to the ZIP transporter (TC 2.A.5) family. High expression in the liver, skin and ovary.

The protein resides in the cell membrane. The catalysed reaction is Zn(2+)(in) = Zn(2+)(out). It carries out the reaction Cd(2+)(in) = Cd(2+)(out). Its function is as follows. Transporter for the divalent cation Zn(2+). Mediates the influx of Zn(2+) into cells from extracellular space. The Zn(2+) uniporter activity is independent of H(+)-driving force, but is modulated by extracellular pH and membrane potential. Transports also other divalent cations Zn(2+), Cd2(+), Cu2(+), Co2(+) in the order of decreasing affinity, respectively. In the skin, aids in the differentiation of keratinocytes in the epidermis. This Mus musculus (Mouse) protein is Zinc transporter ZIP2 (Slc39a2).